We begin with the raw amino-acid sequence, 73 residues long: N-terminal-borealin-like protein (73 aa).

Belongs to the borealin family. As to quaternary structure, component of the aurora kinase complex composed of at least BIR1, BNL1, IPL1 and SLI15.

It is found in the nucleus. It localises to the cytoplasm. The protein resides in the cytoskeleton. Its subcellular location is the spindle. In terms of biological role, component of the aurora kinase complex, also called chromosomal passenger complex (CPC), essential for chromosome segregation and metaphase chromosome alignment. Mediates the SLI15-BIR1 interaction within the CPC. This is N-terminal-borealin-like protein (NBL1) from Saccharomyces cerevisiae (strain ATCC 204508 / S288c) (Baker's yeast).